The sequence spans 440 residues: GTPase Der (440 aa).

EngA-type G domains lie at 4 to 168 (PIVA…NPED) and 177 to 352 (IKVA…NQNA). GTP contacts are provided by residues 10–17 (GRPNVGKS), 57–61 (DTGGI), 120–123 (NKVD), 183–190 (GKPNVGKS), 230–234 (DTAGI), and 295–298 (NKWD). The KH-like domain occupies 353–437 (MRIPTGALNE…PIRFILREKT (85 aa)).

This sequence belongs to the TRAFAC class TrmE-Era-EngA-EngB-Septin-like GTPase superfamily. EngA (Der) GTPase family. In terms of assembly, associates with the 50S ribosomal subunit.

Functionally, GTPase that plays an essential role in the late steps of ribosome biogenesis. The protein is GTPase Der of Alkaliphilus oremlandii (strain OhILAs) (Clostridium oremlandii (strain OhILAs)).